Consider the following 454-residue polypeptide: 5-hydroxytryptamine receptor 3D (454 aa).

A signal peptide spans 1–24 (MQKHSPGPPALALLSQSLLTTGNG). The Extracellular segment spans residues 25–232 (DTLIINCPGF…IRRRCRPSPY (208 aa)). N-linked (GlcNAc...) asparagine glycosylation is present at Asn66. Residues 233-253 (VVNFLVPSGILIAIDALSFYL) traverse the membrane as a helical segment. Topologically, residues 254–264 (PLESGNCAPFK) are cytoplasmic. A helical membrane pass occupies residues 265-285 (MTVLLGYSVFLLMMNDLLPAT). Residues 286 to 306 (STSSHASLVAPLALMQTPLPA) are Extracellular-facing. A helical transmembrane segment spans residues 307–327 (GVYFALCLSLMVGSLLETIFI). At 328–431 (THLLHVATTQ…WVQFSHAMDA (104 aa)) the chain is on the cytoplasmic side. Residues 363–410 (PQKGNKGPGLTPTHLPGVKEPEVSAGQMPGPGEAELTGGSEWTRAQRE) are disordered. The segment at 399–430 (TGGSEWTRAQREHEAQKQHSVELWVQFSHAMD) is HA-stretch; determines single-channel conductance in 5-HT3 receptors. A helical transmembrane segment spans residues 432-452 (LLFRLYLLFMASSIITVICLW). Over 453–454 (NT) the chain is Extracellular.

It belongs to the ligand-gated ion channel (TC 1.A.9) family. 5-hydroxytryptamine receptor (TC 1.A.9.2) subfamily. HTR3D sub-subfamily. In terms of assembly, forms homopentameric as well as heteropentameric serotonin-activated cation-selective channel complexes with HTR3A. The homomeric complex is not functional. Heteropentameric complexes display properties which resemble that of neuronal serotonin-activated channels in vivo. As to expression, expressed in liver, as well as fetal and adult colon and kidney.

The protein localises to the postsynaptic cell membrane. Its subcellular location is the cell membrane. It catalyses the reaction Na(+)(in) = Na(+)(out). The enzyme catalyses K(+)(in) = K(+)(out). It carries out the reaction Ca(2+)(in) = Ca(2+)(out). Its function is as follows. Forms serotonin (5-hydroxytryptamine/5-HT3)-activated cation-selective channel complexes, which when activated cause fast, depolarizing responses in neurons. The protein is 5-hydroxytryptamine receptor 3D of Homo sapiens (Human).